The primary structure comprises 63 residues: Short neurotoxin 2 (63 aa).

4 cysteine pairs are disulfide-bonded: Cys-3–Cys-21, Cys-15–Cys-39, Cys-43–Cys-49, and Cys-50–Cys-55.

Belongs to the three-finger toxin family. Short-chain subfamily. Orphan group XVIII sub-subfamily. As to expression, expressed by the venom gland.

Its subcellular location is the secreted. In terms of biological role, blocks both the muscle-twitch response to nerve stimulation and the response to exogenous acetylcholine. This is Short neurotoxin 2 from Bungarus fasciatus (Banded krait).